The following is a 944-amino-acid chain: UvrABC system protein A (944 aa).

33–40 (GLSGSGKS) is a binding site for ATP. The C4-type zinc finger occupies 252–279 (CPICGFSIGELEPRMFSFNSPFGACPTC). ABC transporter domains are found at residues 309-587 (WEPT…KKSL) and 607-935 (ITDR…QYLK). 639 to 646 (GVSGSGKS) contributes to the ATP binding site. A C4-type zinc finger spans residues 738-764 (CEACKGDGIIKIEMHFLPDVYVPCEVC).

The protein belongs to the ABC transporter superfamily. UvrA family. In terms of assembly, forms a heterotetramer with UvrB during the search for lesions.

The protein localises to the cytoplasm. Its function is as follows. The UvrABC repair system catalyzes the recognition and processing of DNA lesions. UvrA is an ATPase and a DNA-binding protein. A damage recognition complex composed of 2 UvrA and 2 UvrB subunits scans DNA for abnormalities. When the presence of a lesion has been verified by UvrB, the UvrA molecules dissociate. In Staphylococcus epidermidis (strain ATCC 35984 / DSM 28319 / BCRC 17069 / CCUG 31568 / BM 3577 / RP62A), this protein is UvrABC system protein A.